The sequence spans 103 residues: BLOC-1-related complex subunit 7 (103 aa).

Belongs to the BORCS7 family.

It is found in the lysosome membrane. Its function is as follows. As part of a BORC-like complex may play a role in lysosomes movement and localization at the cell periphery. Associated with the cytosolic face of lysosomes, this complex may couple lysosomes to microtubule plus-end-directed kinesin motor. The sequence is that of BLOC-1-related complex subunit 7 from Danio rerio (Zebrafish).